The primary structure comprises 1403 residues: Baculoviral IAP repeat-containing protein 1e (1403 aa).

3 BIR repeats span residues 60-127, 159-227, and 278-345; these read EAKR…CEFL, EEAR…CEFL, and EELR…CVFL. Residues Cys315, Cys318, His335, and Cys342 each contribute to the Zn(2+) site. In terms of domain architecture, NACHT spans 464–759; the sequence is SVMCVEGETG…EFLAAVRLTE (296 aa). ATP is bound at residue 473–478; it reads GSGKTT.

Component of the NLRC4 inflammasome, at least composed of NLRC4, caspase-1 (CASP1) and some NAIP protein. Flagellin binding by NAIP5 triggers assembly of the inflammasome, a huge complex that contains a single NAIP5 chain and multiple copies of NLRC4. As to quaternary structure, (Microbial infection) Interacts with S.typhimurium (Salmonella) flagellin. In terms of assembly, (Microbial infection) Interacts with L.pneumophila flagellin. As to expression, detected in macrophages (at protein level).

In terms of biological role, sensor component of the NLRC4 inflammasome that specifically recognizes and binds flagellin from pathogenic bacteria such as Legionella or Salmonella. Association of pathogenic bacteria proteins drives in turn drive assembly and activation of the NLRC4 inflammasome, promoting caspase-1 activation, cytokine production and macrophage pyroptosis. The NLRC4 inflammasome is activated as part of the innate immune response to a range of intracellular bacteria. The NLRC4 inflammasome senses Gram-negative bacteria such as L.pneumophila and P.aeruginosa, enteric pathogens S.typhimurium (Salmonella) and S.flexneri. May contribute to prevent motor-neuron apoptosis induced by a variety of signals. This chain is Baculoviral IAP repeat-containing protein 1e, found in Mus musculus (Mouse).